Here is a 200-residue protein sequence, read N- to C-terminus: Adenylate kinase (200 aa).

Residue 10–15 (GAGKGT) coordinates ATP. The segment at 30–59 (STGDMLRAAVAAGTPVGLEAKSIMESGGLV) is NMP. Residues threonine 31, arginine 36, 57–59 (GLV), 85–88 (GFPR), and glutamine 92 contribute to the AMP site. An LID region spans residues 126–142 (KRAEETAARGQPVRKDD). Residue arginine 127 participates in ATP binding. AMP contacts are provided by arginine 139 and arginine 150. An ATP-binding site is contributed by lysine 178.

The protein belongs to the adenylate kinase family. In terms of assembly, monomer.

The protein resides in the cytoplasm. The catalysed reaction is AMP + ATP = 2 ADP. It participates in purine metabolism; AMP biosynthesis via salvage pathway; AMP from ADP: step 1/1. Catalyzes the reversible transfer of the terminal phosphate group between ATP and AMP. Plays an important role in cellular energy homeostasis and in adenine nucleotide metabolism. The polypeptide is Adenylate kinase (Methylorubrum populi (strain ATCC BAA-705 / NCIMB 13946 / BJ001) (Methylobacterium populi)).